Here is a 267-residue protein sequence, read N- to C-terminus: Undecaprenyl-diphosphatase (267 aa).

A run of 7 helical transmembrane segments spans residues 4-24 (LYALILGIIEGLTEFLPISST), 41-61 (FWKSFLIIIQLGSILAVIFVF), 69-89 (LDIWLKLAVGFFPTGVIGLFV), 96-116 (LFNGWVVVGMLIFGGVVFILI), 173-193 (AAEFSFLLAIPTMIIATAYSI), 207-227 (IPLGIGFITAFIVAVLVIKFF), and 239-259 (FGIYRIILGFVFFYLYYSGIL).

This sequence belongs to the UppP family.

It is found in the cell inner membrane. The enzyme catalyses di-trans,octa-cis-undecaprenyl diphosphate + H2O = di-trans,octa-cis-undecaprenyl phosphate + phosphate + H(+). Catalyzes the dephosphorylation of undecaprenyl diphosphate (UPP). Confers resistance to bacitracin. This Campylobacter jejuni subsp. jejuni serotype O:23/36 (strain 81-176) protein is Undecaprenyl-diphosphatase.